Here is a 304-residue protein sequence, read N- to C-terminus: Protease HtpX homolog (304 aa).

2 consecutive transmembrane segments (helical) span residues Val-14 to Ile-34 and Tyr-39 to Met-59. His-144 is a binding site for Zn(2+). Residue Glu-145 is part of the active site. His-148 is a binding site for Zn(2+). The next 2 membrane-spanning stretches (helical) occupy residues Ile-159 to Phe-179 and Ala-202 to Ile-222. Glu-231 lines the Zn(2+) pocket.

The protein belongs to the peptidase M48B family. Zn(2+) serves as cofactor.

It localises to the cell membrane. The polypeptide is Protease HtpX homolog (Listeria monocytogenes serotype 4a (strain HCC23)).